Here is a 367-residue protein sequence, read N- to C-terminus: 3-dehydroquinate synthase (367 aa).

Residues 69–74 (DGEAFK), 103–107 (GVIGD), 127–128 (TT), Lys-140, and Lys-149 each bind NAD(+). 3 residues coordinate Zn(2+): Glu-182, His-245, and His-262.

It belongs to the sugar phosphate cyclases superfamily. Dehydroquinate synthase family. It depends on Co(2+) as a cofactor. The cofactor is Zn(2+). Requires NAD(+) as cofactor.

The protein localises to the cytoplasm. It catalyses the reaction 7-phospho-2-dehydro-3-deoxy-D-arabino-heptonate = 3-dehydroquinate + phosphate. It functions in the pathway metabolic intermediate biosynthesis; chorismate biosynthesis; chorismate from D-erythrose 4-phosphate and phosphoenolpyruvate: step 2/7. Functionally, catalyzes the conversion of 3-deoxy-D-arabino-heptulosonate 7-phosphate (DAHP) to dehydroquinate (DHQ). In Pseudomonas savastanoi pv. phaseolicola (strain 1448A / Race 6) (Pseudomonas syringae pv. phaseolicola (strain 1448A / Race 6)), this protein is 3-dehydroquinate synthase.